A 158-amino-acid polypeptide reads, in one-letter code: Regulator of sigma D (158 aa).

Belongs to the Rsd/AlgQ family. Interacts with RpoD.

It is found in the cytoplasm. Functionally, binds RpoD and negatively regulates RpoD-mediated transcription activation by preventing the interaction between the primary sigma factor RpoD with the catalytic core of the RNA polymerase and with promoter DNA. May be involved in replacement of the RNA polymerase sigma subunit from RpoD to RpoS during the transition from exponential growth to the stationary phase. In Escherichia coli O6:H1 (strain CFT073 / ATCC 700928 / UPEC), this protein is Regulator of sigma D.